The chain runs to 269 residues: UPF0524 protein C3orf70 homolog A (269 aa).

Disordered stretches follow at residues 139–203 and 215–249; these read VQRP…DSGI and DEDS…QDEC. The segment covering 141–150 has biased composition (pro residues); sequence RPPPPTPNPT. A compositionally biased stretch (low complexity) spans 151 to 164; sequence HQPQTAAPQPVPQR. The segment covering 179-191 has biased composition (basic and acidic residues); that stretch reads QAKEKISAPKMDH. The span at 215 to 233 shows a compositional bias: acidic residues; that stretch reads DEDSCVDDDDEEEEDDELS.

This sequence belongs to the UPF0524 family.

Its function is as follows. Plays a role in neuronal and neurobehavioral development. Required for normal expression of neuronal markers elavl3 and eno2 and neurobehaviors related to circadian rhythm and changes in light-dark conditions. The polypeptide is UPF0524 protein C3orf70 homolog A (Danio rerio (Zebrafish)).